The primary structure comprises 446 residues: Exodeoxyribonuclease 7 large subunit (446 aa).

This sequence belongs to the XseA family. Heterooligomer composed of large and small subunits.

It is found in the cytoplasm. It catalyses the reaction Exonucleolytic cleavage in either 5'- to 3'- or 3'- to 5'-direction to yield nucleoside 5'-phosphates.. Functionally, bidirectionally degrades single-stranded DNA into large acid-insoluble oligonucleotides, which are then degraded further into small acid-soluble oligonucleotides. The sequence is that of Exodeoxyribonuclease 7 large subunit from Xanthomonas campestris pv. campestris (strain B100).